A 405-amino-acid chain; its full sequence is Accessory Sec system protein translocase subunit SecY2 (405 aa).

Transmembrane regions (helical) follow at residues 14–34 (LFTL…LPFV), 63–83 (LSIF…WQMF), 104–124 (MYLT…RLPV), 131–151 (ILVV…LVWL), 156–176 (ASMG…LNIP), 191–211 (GIIV…ALMY), 247–267 (MYVM…GFIF), 285–305 (PLWV…FAFV), 343–363 (FSVI…LFVL), and 368–388 (LLRL…IFTI).

Belongs to the SecY/SEC61-alpha family. SecY2 subfamily. Component of the accessory SecA2/SecY2 protein translocase complex required to export cell wall proteins. May form heterotrimers with SecE and SecG subunits.

Its subcellular location is the cell membrane. In terms of biological role, part of the accessory SecA2/SecY2 system specifically required for export of possible cell wall proteins. The central subunit of a protein translocation channel. In Streptococcus pneumoniae (strain CGSP14), this protein is Accessory Sec system protein translocase subunit SecY2.